The chain runs to 401 residues: Mannan endo-1,4-beta-mannosidase 3 (401 aa).

An N-terminal signal peptide occupies residues methionine 1–alanine 24. Residues tryptophan 84 and asparagine 198 each coordinate substrate. Glutamate 199 functions as the Proton donor in the catalytic mechanism. Residue tyrosine 277 coordinates substrate. Glutamate 317 functions as the Nucleophile in the catalytic mechanism. Residue tryptophan 356 coordinates substrate.

Belongs to the glycosyl hydrolase 5 (cellulase A) family.

The protein localises to the secreted. The catalysed reaction is Random hydrolysis of (1-&gt;4)-beta-D-mannosidic linkages in mannans, galactomannans and glucomannans.. The sequence is that of Mannan endo-1,4-beta-mannosidase 3 (MAN3) from Solanum lycopersicum (Tomato).